Reading from the N-terminus, the 286-residue chain is Beta-lactamase SHV-13 (286 aa).

A signal peptide spans 1–21 (MRYIRLCIISLLATLPLAVHA). The Acyl-ester intermediate role is filled by serine 66. A disulfide bridge connects residues cysteine 73 and cysteine 119. The active-site Proton acceptor is glutamate 164. Residue 230–232 (KTG) coordinates substrate.

Belongs to the class-A beta-lactamase family.

It carries out the reaction a beta-lactam + H2O = a substituted beta-amino acid. Its activity is regulated as follows. Inhibited 16-fold better by the beta-lactamase inhibitor clavulanic acid than by tazobactam. In terms of biological role, broad spectrum beta-lactamase which hydrolyzes penicillins, as well as cephalosporins except cephamycins. Also hydrolyzes aztreonam, but not imipenem. Confers highly resistance to ceftazidime, cefotaxime, aztreonam and piperacillin. In Klebsiella pneumoniae, this protein is Beta-lactamase SHV-13 (bla).